The primary structure comprises 397 residues: uncharacterized protein (397 aa).

4 consecutive transmembrane segments (helical) span residues L255–A275, M284–A304, L308–L328, and V370–G390.

The protein resides in the cell membrane. This is an uncharacterized protein from Methanocaldococcus jannaschii (strain ATCC 43067 / DSM 2661 / JAL-1 / JCM 10045 / NBRC 100440) (Methanococcus jannaschii).